Consider the following 470-residue polypeptide: Acetyl-CoA decarbonylase/synthase complex subunit gamma 2 (470 aa).

Positions 1–60 constitute a 4Fe-4S domain; sequence MKINSPLEAYKYLPQTNCGECGQPTCMAFASTLIDRSGKTTDCPPLIKEKKFAKKLAELD. Cys-18, Cys-21, Cys-26, and Cys-43 together coordinate [4Fe-4S] cluster.

As to quaternary structure, heterodimer of delta and gamma chains. The ACDS complex is made up of alpha, epsilon, beta, gamma and delta chains with a probable stoichiometry of (alpha(2)epsilon(2))(4)-beta(8)-(gamma(1)delta(1))(8). The cofactor is corrinoid. It depends on [4Fe-4S] cluster as a cofactor.

It carries out the reaction 5,6,7,8-tetrahydrosarcinapterin + methyl-Co(III)-[corrinoid Fe-S protein] = 5-methyltetrahydrosarcinapterin + Co(I)-[corrinoid Fe-S protein] + H(+). It functions in the pathway one-carbon metabolism; methanogenesis from acetate. Part of a complex that catalyzes the reversible cleavage of acetyl-CoA, allowing growth on acetate as sole source of carbon and energy. The chain is Acetyl-CoA decarbonylase/synthase complex subunit gamma 2 from Methanosarcina mazei (strain ATCC BAA-159 / DSM 3647 / Goe1 / Go1 / JCM 11833 / OCM 88) (Methanosarcina frisia).